The primary structure comprises 232 residues: RNA chaperone ProQ (232 aa).

Positions 105–182 (EAKARVQAQR…REEQHTPVSD (78 aa)) are disordered. The span at 117 to 136 (QQAKKREAAAAAGEKEDAPR) shows a compositional bias: basic and acidic residues. Basic residues predominate over residues 137-146 (RERKPRPTTP). Residues 147–177 (RRKEGAERKPRAQKPVEKAPKTAKAPREEQH) show a composition bias toward basic and acidic residues.

This sequence belongs to the ProQ family.

The protein resides in the cytoplasm. RNA chaperone with significant RNA binding, RNA strand exchange and RNA duplexing activities. May regulate ProP activity through an RNA-based, post-transcriptional mechanism. This chain is RNA chaperone ProQ, found in Shigella dysenteriae serotype 1 (strain Sd197).